Reading from the N-terminus, the 209-residue chain is Kynurenine formamidase (209 aa).

F18 is a substrate binding site. Zn(2+) is bound by residues H48, H52, and D54. The active-site Proton donor/acceptor is the H58. Zn(2+) is bound by residues H160 and E172.

The protein belongs to the Cyclase 1 superfamily. KynB family. As to quaternary structure, homodimer. Requires Zn(2+) as cofactor.

It catalyses the reaction N-formyl-L-kynurenine + H2O = L-kynurenine + formate + H(+). Its pathway is amino-acid degradation; L-tryptophan degradation via kynurenine pathway; L-kynurenine from L-tryptophan: step 2/2. Its function is as follows. Catalyzes the hydrolysis of N-formyl-L-kynurenine to L-kynurenine, the second step in the kynurenine pathway of tryptophan degradation. This chain is Kynurenine formamidase, found in Bordetella petrii (strain ATCC BAA-461 / DSM 12804 / CCUG 43448).